We begin with the raw amino-acid sequence, 336 residues long: D-erythrose-4-phosphate dehydrogenase (336 aa).

NAD(+)-binding positions include 11-12 and R80; that span reads RI. Residues 153 to 155, R199, 212 to 213, and R235 contribute to the substrate site; these read SCT and TK. The active-site Nucleophile is C154. Residue N317 coordinates NAD(+).

Belongs to the glyceraldehyde-3-phosphate dehydrogenase family. Epd subfamily. In terms of assembly, homotetramer.

Its subcellular location is the cytoplasm. The catalysed reaction is D-erythrose 4-phosphate + NAD(+) + H2O = 4-phospho-D-erythronate + NADH + 2 H(+). It participates in cofactor biosynthesis; pyridoxine 5'-phosphate biosynthesis; pyridoxine 5'-phosphate from D-erythrose 4-phosphate: step 1/5. Functionally, catalyzes the NAD-dependent conversion of D-erythrose 4-phosphate to 4-phosphoerythronate. The polypeptide is D-erythrose-4-phosphate dehydrogenase (Aeromonas hydrophila subsp. hydrophila (strain ATCC 7966 / DSM 30187 / BCRC 13018 / CCUG 14551 / JCM 1027 / KCTC 2358 / NCIMB 9240 / NCTC 8049)).